A 282-amino-acid chain; its full sequence is Bifunctional protein FolD 2 (282 aa).

NADP(+)-binding positions include 164–166 (GRS) and serine 189.

It belongs to the tetrahydrofolate dehydrogenase/cyclohydrolase family. As to quaternary structure, homodimer.

The enzyme catalyses (6R)-5,10-methylene-5,6,7,8-tetrahydrofolate + NADP(+) = (6R)-5,10-methenyltetrahydrofolate + NADPH. It carries out the reaction (6R)-5,10-methenyltetrahydrofolate + H2O = (6R)-10-formyltetrahydrofolate + H(+). Its pathway is one-carbon metabolism; tetrahydrofolate interconversion. In terms of biological role, catalyzes the oxidation of 5,10-methylenetetrahydrofolate to 5,10-methenyltetrahydrofolate and then the hydrolysis of 5,10-methenyltetrahydrofolate to 10-formyltetrahydrofolate. This Lactobacillus johnsonii (strain CNCM I-12250 / La1 / NCC 533) protein is Bifunctional protein FolD 2.